A 637-amino-acid polypeptide reads, in one-letter code: Chaperone protein HtpG (637 aa).

An a; substrate-binding region spans residues 1–345; it reads MSQQETHGFQ…SNDLPLNVSR (345 aa). The segment at 346 to 562 is b; it reads EILQDNHITK…EGEMSTQMIK (217 aa). A c region spans residues 563–637; that stretch reads LMQAAGQPVP…MNQMLLANMK (75 aa).

The protein belongs to the heat shock protein 90 family. As to quaternary structure, homodimer.

The protein resides in the cytoplasm. In terms of biological role, molecular chaperone. Has ATPase activity. In Shewanella putrefaciens (strain CN-32 / ATCC BAA-453), this protein is Chaperone protein HtpG.